The chain runs to 253 residues: Tetraspanin-3 (253 aa).

Over M1–T11 the chain is Cytoplasmic. The chain crosses the membrane as a helical span at residues V12–A32. The Extracellular segment spans residues Y33–T50. Residues L51 to G71 form a helical membrane-spanning segment. The Cytoplasmic portion of the chain corresponds to C72 to T85. A helical membrane pass occupies residues F86 to V106. The Extracellular portion of the chain corresponds to Y107 to V212. N-linked (GlcNAc...) asparagine glycosylation is found at N127, N152, N167, and N183. A helical transmembrane segment spans residues I213–V233. At L234 to A253 the chain is on the cytoplasmic side.

Belongs to the tetraspanin (TM4SF) family. In terms of assembly, interacts with claudin-11/CLDN11 and integrins.

It is found in the membrane. Regulates the proliferation and migration of oligodendrocytes, a process essential for normal myelination and repair. The chain is Tetraspanin-3 (Tspan3) from Mus musculus (Mouse).